A 71-amino-acid chain; its full sequence is Small ribosomal subunit protein bS21 (71 aa).

This sequence belongs to the bacterial ribosomal protein bS21 family.

The polypeptide is Small ribosomal subunit protein bS21 (Shewanella woodyi (strain ATCC 51908 / MS32)).